Consider the following 355-residue polypeptide: Acidic fibroblast growth factor intracellular-binding protein B (355 aa).

As to quaternary structure, interacts with IER2.

The protein localises to the nucleus. It localises to the endomembrane system. Its function is as follows. Mediates with IER2 FGF-signaling in Kupffer's vesicle ciliogenesis and in the establishment of laterality in the embryo. May be involved in mitogenic function of FGF1. The sequence is that of Acidic fibroblast growth factor intracellular-binding protein B from Danio rerio (Zebrafish).